Reading from the N-terminus, the 25-residue chain is M-poneritoxin-Na1b (25 aa).

It belongs to the non-disulfide-bridged peptide (NDBP) superfamily. Medium-length antimicrobial peptide (group 3) family. Ponericin-W subfamily. As to expression, expressed by the venom gland.

The protein localises to the secreted. The protein resides in the target cell membrane. Membrane-perturbating peptide with multiple activities. It is insecticidal, since it induces reversible paralysis in insects (L.cuprina) after 1 hour, but fails to kill flies. It shows a relatively strong and broad-spectrum antibacterial activity against both Gram-positive and Gram-negative bacteria (MIC&lt;20 uM). It is also anthelmintic, since it potently inhibits the larval development of the major pathogenic nematode of ruminants (H.contortus, IC(50)=2.8 uM). Interestingly, only at 10 uM, it increases adult males motility of the other nematode B.malayi for 24 hours post-treatment, followed by a reduction in motility for the rest of the experiment. It shows cytotoxic activity against HEK293 cells (EC(50)=4-6 uM) and induces hemolysis in human erythrocytes (EC(50)=40-62 uM). In addition, it causes an important increase in intracellular calcium concentration on neuronal and epithelial cell lines, which supports a non-specific membrane perturbation mechanism of action. In vivo, it induces pain by intraplantar injection into mice, suggesting a defensive function against vertebrate predators. The sequence is that of M-poneritoxin-Na1b from Neoponera apicalis (Ant).